The chain runs to 113 residues: Large ribosomal subunit protein bL17 (113 aa).

It belongs to the bacterial ribosomal protein bL17 family. Part of the 50S ribosomal subunit. Contacts protein L32.

This chain is Large ribosomal subunit protein bL17, found in Clostridium beijerinckii (strain ATCC 51743 / NCIMB 8052) (Clostridium acetobutylicum).